The primary structure comprises 461 residues: Cysteine--tRNA ligase (461 aa).

Position 28 (C28) interacts with Zn(2+). Positions 30-40 (ITVYDLCHIGH) match the 'HIGH' region motif. Residues C209, H234, and E238 each contribute to the Zn(2+) site. Positions 266 to 270 (KMSKS) match the 'KMSKS' region motif. An ATP-binding site is contributed by K269.

The protein belongs to the class-I aminoacyl-tRNA synthetase family. As to quaternary structure, monomer. Zn(2+) serves as cofactor.

The protein resides in the cytoplasm. It carries out the reaction tRNA(Cys) + L-cysteine + ATP = L-cysteinyl-tRNA(Cys) + AMP + diphosphate. This is Cysteine--tRNA ligase from Shigella sonnei (strain Ss046).